Consider the following 73-residue polypeptide: Cell division protein ZapB (73 aa).

Positions 3–67 form a coiled coil; sequence LELLSKLETK…WNDKVTGLVG (65 aa).

The protein belongs to the ZapB family. In terms of assembly, homodimer. The ends of the coiled-coil dimer bind to each other, forming polymers. Interacts with FtsZ.

It localises to the cytoplasm. Non-essential, abundant cell division factor that is required for proper Z-ring formation. It is recruited early to the divisome by direct interaction with FtsZ, stimulating Z-ring assembly and thereby promoting cell division earlier in the cell cycle. Its recruitment to the Z-ring requires functional FtsA or ZipA. This Shewanella sp. (strain MR-4) protein is Cell division protein ZapB.